Consider the following 219-residue polypeptide: Kappa-scoloptoxin(11)-Ss1a (219 aa).

Positions 1–16 (MFYSHLLFFTFTFACS) are cleaved as a signal peptide. A propeptide spanning residues 17–25 (SSLNRKTKR) is cleaved from the precursor.

Contains 8 disulfide bonds. Expressed by the venom gland.

The protein localises to the secreted. Functionally, voltage-gated potassium channel inhibitor. The protein is Kappa-scoloptoxin(11)-Ss1a of Scolopendra dehaani (Thai centipede).